The chain runs to 202 residues: Superoxide dismutase [Mn] (202 aa).

Mn(2+) is bound by residues His-27, His-82, Asp-164, and His-168.

This sequence belongs to the iron/manganese superoxide dismutase family. Homodimer. Requires Mn(2+) as cofactor.

The catalysed reaction is 2 superoxide + 2 H(+) = H2O2 + O2. Its function is as follows. Destroys superoxide anion radicals which are normally produced within the cells and which are toxic to biological systems. This is Superoxide dismutase [Mn] (sodA) from Listeria ivanovii.